A 92-amino-acid polypeptide reads, in one-letter code: Acylphosphatase (92 aa).

The cysteines at positions 5 and 49 are disulfide-linked. The Acylphosphatase-like domain occupies 5–92 (CIIAWVYGRV…SGELTDFRIR (88 aa)). Active-site residues include arginine 20 and asparagine 38.

It belongs to the acylphosphatase family.

It catalyses the reaction an acyl phosphate + H2O = a carboxylate + phosphate + H(+). The polypeptide is Acylphosphatase (Escherichia coli O157:H7).